The chain runs to 1331 residues: Beta-mannanase/endoglucanase A (1331 aa).

Residues 1 to 41 form the signal peptide; sequence MRLKTKIRKKWLSVLCTVVFLLNILFIANVTILPKVGAATS. Residues 42 to 325 are catalytic (mannanase); that stretch reads NDGVVKIDTS…YKTNAIGTSS (284 aa). Glutamate 162 (proton donor) is an active-site residue. The Nucleophile role is filled by glutamate 257. Disordered regions lie at residues 319–363, 515–566, and 717–780; these read NAIG…TPAT, PSGA…TPAT, and EPSG…PLPT. The segment covering 323-335 has biased composition (low complexity); that stretch reads TSSTPTPTSTVTP. One can recognise a CBM3 1 domain in the interval 363–516; that stretch reads TSGQIKVLYA…GVLVWGQEPS (154 aa). Composition is skewed to pro residues over residues 521-541 and 551-561; these read APAPTATPTPTPTVTPTPTVT and TPTPTPTPTPV. One can recognise a CBM3 2 domain in the interval 566–719; that stretch reads TGGQIKVLYA…GVLVWGQEPS (154 aa). Low complexity predominate over residues 721-735; the sequence is TTPSPTSTPTVTVTP. 2 stretches are compositionally biased toward pro residues: residues 736–756 and 766–780; these read TPTPTPTPTPTPTVTPTPTVT and TPTPTPIPTVTPLPT. The tract at residues 781–1331 is catalytic (endoglucanase); that stretch reads ISPSPSVVEI…RNLVFMRALV (551 aa).

This sequence in the N-terminal section; belongs to the glycosyl hydrolase 5 (cellulase A) family. In the C-terminal section; belongs to the glycosyl hydrolase 44 (cellulase J) family.

The enzyme catalyses Random hydrolysis of (1-&gt;4)-beta-D-mannosidic linkages in mannans, galactomannans and glucomannans.. The catalysed reaction is Endohydrolysis of (1-&gt;4)-beta-D-glucosidic linkages in cellulose, lichenin and cereal beta-D-glucans.. In terms of biological role, degradation of hemicelluloses, the second most abundant polysaccharides in nature. Contains two catalytic domains with mannanase and endoglucanase activities. The sequence is that of Beta-mannanase/endoglucanase A (manA) from Caldicellulosiruptor saccharolyticus (Caldocellum saccharolyticum).